Consider the following 123-residue polypeptide: Ribonuclease P protein component (123 aa).

It belongs to the RnpA family. As to quaternary structure, consists of a catalytic RNA component (M1 or rnpB) and a protein subunit.

It carries out the reaction Endonucleolytic cleavage of RNA, removing 5'-extranucleotides from tRNA precursor.. RNaseP catalyzes the removal of the 5'-leader sequence from pre-tRNA to produce the mature 5'-terminus. It can also cleave other RNA substrates such as 4.5S RNA. The protein component plays an auxiliary but essential role in vivo by binding to the 5'-leader sequence and broadening the substrate specificity of the ribozyme. This chain is Ribonuclease P protein component, found in Streptococcus pneumoniae serotype 4 (strain ATCC BAA-334 / TIGR4).